The following is a 575-amino-acid chain: Isocitrate dehydrogenase kinase/phosphatase (575 aa).

ATP contacts are provided by residues alanine 315–methionine 321 and lysine 336. The active site involves aspartate 371.

This sequence belongs to the AceK family.

Its subcellular location is the cytoplasm. It carries out the reaction L-seryl-[isocitrate dehydrogenase] + ATP = O-phospho-L-seryl-[isocitrate dehydrogenase] + ADP + H(+). Its function is as follows. Bifunctional enzyme which can phosphorylate or dephosphorylate isocitrate dehydrogenase (IDH) on a specific serine residue. This is a regulatory mechanism which enables bacteria to bypass the Krebs cycle via the glyoxylate shunt in response to the source of carbon. When bacteria are grown on glucose, IDH is fully active and unphosphorylated, but when grown on acetate or ethanol, the activity of IDH declines drastically concomitant with its phosphorylation. The chain is Isocitrate dehydrogenase kinase/phosphatase from Yersinia enterocolitica serotype O:8 / biotype 1B (strain NCTC 13174 / 8081).